The chain runs to 548 residues: Polynucleotide 5'-hydroxyl-kinase nol-9 (548 aa).

186–193 (GHKGAGKS) serves as a coordination point for ATP.

It belongs to the Clp1 family. NOL9/GRC3 subfamily.

It is found in the nucleus. Its subcellular location is the nucleolus. Polynucleotide 5'-kinase involved in rRNA processing. This is Polynucleotide 5'-hydroxyl-kinase nol-9 (nol-9) from Caenorhabditis briggsae.